We begin with the raw amino-acid sequence, 477 residues long: Homospermidine synthase (477 aa).

The protein belongs to the saccharopine dehydrogenase family. In terms of assembly, homodimer. NAD(+) is required as a cofactor.

The enzyme catalyses 2 putrescine = sym-homospermidine + NH4(+). It catalyses the reaction putrescine + spermidine = sym-homospermidine + propane-1,3-diamine. Its function is as follows. Involved in the NAD(+)-dependent synthesis of the polyamine homospermidine from putrescine. This Blastochloris viridis (Rhodopseudomonas viridis) protein is Homospermidine synthase (hss).